A 209-amino-acid chain; its full sequence is Outer-membrane lipoprotein LolB (209 aa).

The signal sequence occupies residues 1–17 (MKKSTLLFSLMAMALSG). The N-palmitoyl cysteine moiety is linked to residue Cys-18. The S-diacylglycerol cysteine moiety is linked to residue Cys-18.

It belongs to the LolB family. In terms of assembly, monomer.

It is found in the cell outer membrane. In terms of biological role, plays a critical role in the incorporation of lipoproteins in the outer membrane after they are released by the LolA protein. In Haemophilus ducreyi (strain 35000HP / ATCC 700724), this protein is Outer-membrane lipoprotein LolB.